We begin with the raw amino-acid sequence, 439 residues long: Adenylosuccinate synthetase (439 aa).

Residues 25–31 and 53–55 each bind GTP; these read GDEGKGK and GHT. Catalysis depends on aspartate 26, which acts as the Proton acceptor. Mg(2+) is bound by residues aspartate 26 and glycine 53. IMP is bound by residues 26–29, 51–54, threonine 146, arginine 160, asparagine 237, threonine 252, and arginine 316; these read DEGK and NAGH. Histidine 54 functions as the Proton donor in the catalytic mechanism. 312 to 318 serves as a coordination point for substrate; sequence VTTGRRR. GTP-binding positions include arginine 318, 344–346, and 426–428; these read KLD and GVG.

Belongs to the adenylosuccinate synthetase family. As to quaternary structure, homodimer. It depends on Mg(2+) as a cofactor.

The protein localises to the cytoplasm. It carries out the reaction IMP + L-aspartate + GTP = N(6)-(1,2-dicarboxyethyl)-AMP + GDP + phosphate + 2 H(+). It functions in the pathway purine metabolism; AMP biosynthesis via de novo pathway; AMP from IMP: step 1/2. In terms of biological role, plays an important role in the de novo pathway and in the salvage pathway of purine nucleotide biosynthesis. Catalyzes the first committed step in the biosynthesis of AMP from IMP. The chain is Adenylosuccinate synthetase from Mycosarcoma maydis (Corn smut fungus).